Consider the following 343-residue polypeptide: L-idonate 5-dehydrogenase (NAD(P)(+)) (343 aa).

Zn(2+) contacts are provided by Cys40, His65, Cys93, Cys96, Cys99, Cys107, and Glu153.

This sequence belongs to the zinc-containing alcohol dehydrogenase family. Zn(2+) is required as a cofactor.

The catalysed reaction is L-idonate + NADP(+) = 5-dehydro-D-gluconate + NADPH + H(+). It catalyses the reaction L-idonate + NAD(+) = 5-dehydro-D-gluconate + NADH + H(+). It participates in carbohydrate acid metabolism; L-idonate degradation. Catalyzes the NADH/NADPH-dependent oxidation of L-idonate to 5-ketogluconate (5KG). The polypeptide is L-idonate 5-dehydrogenase (NAD(P)(+)) (idnD) (Escherichia coli (strain K12)).